Reading from the N-terminus, the 207-residue chain is Crossover junction endodeoxyribonuclease RuvC (207 aa).

Residues D11, E71, and D143 contribute to the active site. Mg(2+)-binding residues include D11, E71, and D143.

Belongs to the RuvC family. As to quaternary structure, homodimer which binds Holliday junction (HJ) DNA. The HJ becomes 2-fold symmetrical on binding to RuvC with unstacked arms; it has a different conformation from HJ DNA in complex with RuvA. In the full resolvosome a probable DNA-RuvA(4)-RuvB(12)-RuvC(2) complex forms which resolves the HJ. Mg(2+) is required as a cofactor.

It localises to the cytoplasm. The catalysed reaction is Endonucleolytic cleavage at a junction such as a reciprocal single-stranded crossover between two homologous DNA duplexes (Holliday junction).. Its function is as follows. The RuvA-RuvB-RuvC complex processes Holliday junction (HJ) DNA during genetic recombination and DNA repair. Endonuclease that resolves HJ intermediates. Cleaves cruciform DNA by making single-stranded nicks across the HJ at symmetrical positions within the homologous arms, yielding a 5'-phosphate and a 3'-hydroxyl group; requires a central core of homology in the junction. The consensus cleavage sequence is 5'-(A/T)TT(C/G)-3'. Cleavage occurs on the 3'-side of the TT dinucleotide at the point of strand exchange. HJ branch migration catalyzed by RuvA-RuvB allows RuvC to scan DNA until it finds its consensus sequence, where it cleaves and resolves the cruciform DNA. The polypeptide is Crossover junction endodeoxyribonuclease RuvC (Methylobacterium radiotolerans (strain ATCC 27329 / DSM 1819 / JCM 2831 / NBRC 15690 / NCIMB 10815 / 0-1)).